The following is a 273-amino-acid chain: Putative pyruvate, phosphate dikinase regulatory protein (273 aa).

153-160 contributes to the ADP binding site; it reads GVSRTSKS.

Belongs to the pyruvate, phosphate/water dikinase regulatory protein family. PDRP subfamily.

The catalysed reaction is N(tele)-phospho-L-histidyl/L-threonyl-[pyruvate, phosphate dikinase] + ADP = N(tele)-phospho-L-histidyl/O-phospho-L-threonyl-[pyruvate, phosphate dikinase] + AMP + H(+). It carries out the reaction N(tele)-phospho-L-histidyl/O-phospho-L-threonyl-[pyruvate, phosphate dikinase] + phosphate + H(+) = N(tele)-phospho-L-histidyl/L-threonyl-[pyruvate, phosphate dikinase] + diphosphate. In terms of biological role, bifunctional serine/threonine kinase and phosphorylase involved in the regulation of the pyruvate, phosphate dikinase (PPDK) by catalyzing its phosphorylation/dephosphorylation. The chain is Putative pyruvate, phosphate dikinase regulatory protein from Ehrlichia ruminantium (strain Welgevonden).